A 307-amino-acid chain; its full sequence is Membrane protein insertase YidC 2 (307 aa).

Positions 1-23 are cleaved as a signal peptide; it reads MKLTLNRILFSGLALSILFTLTG. Cysteine 24 carries the N-palmitoyl cysteine lipid modification. Cysteine 24 carries S-diacylglycerol cysteine lipidation. Helical transmembrane passes span 58–78, 135–155, 179–199, 209–225, and 231–251; these read LGYGLAIIIVTIIVRTLILPL, LGGIGCLPLLIQMPFFSAMYF, VLTAIIAALYFFQSWLSMMAV, TMMYTMPIMMIFMSFSL, and LYWLVGGFFSIIQQLITTYLL. Residues 263–307 are disordered; it reads YAKNPPKAYQSTSSRKDVTPSQNMEQANLPKKIKSNRNAGKQRKR. Residues 271–288 show a composition bias toward polar residues; it reads YQSTSSRKDVTPSQNMEQ. The segment covering 293 to 307 has biased composition (basic residues); sequence KKIKSNRNAGKQRKR.

This sequence belongs to the OXA1/ALB3/YidC family. Type 2 subfamily.

It localises to the cell membrane. Required for the insertion and/or proper folding and/or complex formation of integral membrane proteins into the membrane. Involved in integration of membrane proteins that insert both dependently and independently of the Sec translocase complex, as well as at least some lipoproteins. This is Membrane protein insertase YidC 2 from Streptococcus pyogenes serotype M3 (strain ATCC BAA-595 / MGAS315).